Reading from the N-terminus, the 328-residue chain is YDG domain-containing protein At5g47150 (328 aa).

One can recognise a YDG domain in the interval 176-320; it reads GSVPGINIGD…KSVYKFKLCR (145 aa).

Its subcellular location is the nucleus. In Arabidopsis thaliana (Mouse-ear cress), this protein is YDG domain-containing protein At5g47150.